A 388-amino-acid polypeptide reads, in one-letter code: Succinate--CoA ligase [ADP-forming] subunit beta (388 aa).

One can recognise an ATP-grasp domain in the interval 9–244; sequence KALFAEYGLP…PSQDDAREAH (236 aa). ATP contacts are provided by residues K46, 53 to 55, E99, T102, and E107; that span reads GRG. Mg(2+) contacts are provided by N199 and D213. Substrate-binding positions include N264 and 321–323; that span reads GIV.

Belongs to the succinate/malate CoA ligase beta subunit family. As to quaternary structure, heterotetramer of two alpha and two beta subunits. The cofactor is Mg(2+).

The catalysed reaction is succinate + ATP + CoA = succinyl-CoA + ADP + phosphate. It catalyses the reaction GTP + succinate + CoA = succinyl-CoA + GDP + phosphate. It functions in the pathway carbohydrate metabolism; tricarboxylic acid cycle; succinate from succinyl-CoA (ligase route): step 1/1. In terms of biological role, succinyl-CoA synthetase functions in the citric acid cycle (TCA), coupling the hydrolysis of succinyl-CoA to the synthesis of either ATP or GTP and thus represents the only step of substrate-level phosphorylation in the TCA. The beta subunit provides nucleotide specificity of the enzyme and binds the substrate succinate, while the binding sites for coenzyme A and phosphate are found in the alpha subunit. The chain is Succinate--CoA ligase [ADP-forming] subunit beta from Shewanella amazonensis (strain ATCC BAA-1098 / SB2B).